The sequence spans 63 residues: uncharacterized protein (63 aa).

This is an uncharacterized protein from Escherichia coli (strain K12).